The chain runs to 1228 residues: Nitrate reductase alpha chain (1228 aa).

A 4Fe-4S Mo/W bis-MGD-type domain is found at 47–111; it reads DKVVRSTHGV…SFSWYIYSPL (65 aa). Residues His-54, Cys-58, Cys-62, and Cys-97 each contribute to the [4Fe-4S] cluster site. Asp-227 is a binding site for Mo-bis(molybdopterin guanine dinucleotide).

The protein belongs to the prokaryotic molybdopterin-containing oxidoreductase family. It depends on [4Fe-4S] cluster as a cofactor. Mo-bis(molybdopterin guanine dinucleotide) serves as cofactor.

Its subcellular location is the cell membrane. It carries out the reaction nitrate + a quinol = a quinone + nitrite + H2O. Functionally, the alpha chain is the actual site of nitrate reduction. The protein is Nitrate reductase alpha chain (narG) of Bacillus subtilis (strain 168).